A 216-amino-acid polypeptide reads, in one-letter code: Urease accessory protein UreG (216 aa).

25–32 (GPVGSGKT) serves as a coordination point for GTP.

It belongs to the SIMIBI class G3E GTPase family. UreG subfamily. As to quaternary structure, homodimer. UreD, UreF and UreG form a complex that acts as a GTP-hydrolysis-dependent molecular chaperone, activating the urease apoprotein by helping to assemble the nickel containing metallocenter of UreC. The UreE protein probably delivers the nickel.

The protein resides in the cytoplasm. Facilitates the functional incorporation of the urease nickel metallocenter. This process requires GTP hydrolysis, probably effectuated by UreG. The protein is Urease accessory protein UreG of Burkholderia thailandensis (strain ATCC 700388 / DSM 13276 / CCUG 48851 / CIP 106301 / E264).